A 1439-amino-acid polypeptide reads, in one-letter code: Microtubule organization protein AKNA (1439 aa).

Basic and acidic residues-rich tracts occupy residues 1 to 10 (MASSETEIRW) and 25 to 35 (AWAEDKRDVDR). The interval 1 to 394 (MASSETEIRW…NRKPQAPARP (394 aa)) is disordered. A Phosphoserine modification is found at Ser52. Basic and acidic residues predominate over residues 71-83 (WDPHPQPDGHQDS). Acidic residues predominate over residues 89 to 99 (SGEEAEAEDVD). The span at 263–275 (QDSSAPPAQSPQH) shows a compositional bias: polar residues. A compositionally biased stretch (basic and acidic residues) spans 276–285 (ATDRWRRETT). Phosphoserine occurs at positions 316, 499, and 534. Disordered regions lie at residues 507–562 (SAEW…SAEQ) and 659–682 (IDQTQQEPEPPGSDSALDSTPALP). Over residues 533–544 (LSPSSLTSMPTL) the composition is skewed to low complexity. Ser767 and Ser770 each carry phosphoserine. A PEST region spans residues 771–804 (LPEAMRMEEEEEGEEEEEEEGGGDSLEVDGVAAT). Disordered stretches follow at residues 775 to 942 (MRME…QTPE) and 977 to 1005 (IPRRATEPSTPRSQAQRYLSSPSGPLRQR). The span at 778-792 (EEEEEGEEEEEEEGG) shows a compositional bias: acidic residues. Ser848 is subject to Phosphoserine. Positions 865–875 (PPGPGVPPHPP) are enriched in pro residues. 3 stretches are compositionally biased toward polar residues: residues 879-891 (SAASHQSSMTSLE), 929-940 (SETSRVSPLTQT), and 983-999 (EPSTPRSQAQRYLSSPS). At Ser886 the chain carries Phosphoserine. Residues 911–932 (HLEETWMASPETDSGFVGSETS) form a PEST region. Ser997 and Ser1010 each carry phosphoserine. The disordered stretch occupies residues 1095–1165 (LHQPLQGSPT…RARSSSVPRE (71 aa)). Residues 1115-1123 (RTRGRPADS) constitute a DNA-binding region (a.T hook). Positions 1135–1147 (STERLPGEPRGEE) are enriched in basic and acidic residues. Ser1172 and Ser1173 each carry phosphoserine. The disordered stretch occupies residues 1180 to 1211 (LPLFSEKSKTTKDSPQAARDGKRGVGSAGWPD). Ser1228 is subject to Phosphoserine. Residues 1252–1329 (AGGAVTGDPL…RPPPGLWYLA (78 aa)) are disordered. Residues 1303-1317 (SSTPSPKQRSKQAGS) are compositionally biased toward polar residues. Phosphoserine occurs at positions 1377, 1387, and 1424.

The protein belongs to the AKNA family. As to quaternary structure, interacts with DCTN1. Interacts with MAPRE1/EB1. Interacts with ODF2. Interacts with CAMSAP3. In terms of processing, phosphorylated; phosphorylation regulates dissociation from and reassembly at the centrosome. As to expression, predominantly expressed by lymphoid tissues. Highly expressed in the spleen, lymph nodes and peripheral blood leukocytes, expressed at lower level in the thymus. Mainly expressed by germinal center B-lymphocytes, a stage in which receptor and ligand interactions are crucial for B-lymphocyte maturation. Expressed by B- and T-lymphocytes, Natural killer cells and CD1a(+)CD14(-) but not CD1a(-)CD14(+) dendritic cells. Weakly or not expressed in fetal liver and in adult bone marrow.

The protein resides in the cytoplasm. It localises to the cytoskeleton. Its subcellular location is the microtubule organizing center. It is found in the centrosome. The protein localises to the centriole. The protein resides in the nucleus. Centrosomal protein that plays a key role in cell delamination by regulating microtubule organization. Required for the delamination and retention of neural stem cells from the subventricular zone during neurogenesis. Also regulates the epithelial-to-mesenchymal transition in other epithelial cells. Acts by increasing centrosomal microtubule nucleation and recruiting nucleation factors and minus-end stabilizers, thereby destabilizing microtubules at the adherens junctions and mediating constriction of the apical endfoot. In addition, may also act as a transcription factor that specifically activates the expression of the CD40 receptor and its ligand CD40L/CD154, two cell surface molecules on lymphocytes that are critical for antigen-dependent-B-cell development. Binds to A/T-rich promoters. It is unclear how it can both act as a microtubule organizer and as a transcription factor; additional evidences are required to reconcile these two apparently contradictory functions. This Homo sapiens (Human) protein is Microtubule organization protein AKNA.